Here is a 129-residue protein sequence, read N- to C-terminus: Translation initiation factor 5A (129 aa).

At K36 the chain carries Hypusine.

The protein belongs to the eIF-5A family.

The protein resides in the cytoplasm. Its function is as follows. Functions by promoting the formation of the first peptide bond. The polypeptide is Translation initiation factor 5A (Picrophilus torridus (strain ATCC 700027 / DSM 9790 / JCM 10055 / NBRC 100828 / KAW 2/3)).